Consider the following 153-residue polypeptide: Ribosomal RNA large subunit methyltransferase H (153 aa).

S-adenosyl-L-methionine-binding positions include Leu-75, Gly-102, and 121 to 126 (LSKLTL).

Belongs to the RNA methyltransferase RlmH family. As to quaternary structure, homodimer.

The protein localises to the cytoplasm. It carries out the reaction pseudouridine(1915) in 23S rRNA + S-adenosyl-L-methionine = N(3)-methylpseudouridine(1915) in 23S rRNA + S-adenosyl-L-homocysteine + H(+). Functionally, specifically methylates the pseudouridine at position 1915 (m3Psi1915) in 23S rRNA. In Campylobacter jejuni (strain RM1221), this protein is Ribosomal RNA large subunit methyltransferase H.